The following is a 195-amino-acid chain: Cholesin (195 aa).

Positions 1–78 are disordered; it reads MAKHKRKGLE…KEEKKRLREA (78 aa). Basic and acidic residues-rich tracts occupy residues 8 to 18 and 26 to 39; these read GLEGTGKESKR and ETPR…DKET. Phosphoserine occurs at positions 41, 48, and 52. Residues 53-77 are compositionally biased toward basic and acidic residues; the sequence is PEERRVLERKLKKERKKEEKKRLRE. Serine 96 is modified (phosphoserine).

In terms of tissue distribution, secreted via exosomes, secreted from the instestine, secretion is induced by feeding and cholesterol absorption. Expressed in enterocytes.

It is found in the secreted. Functionally, hormone secreted from the intestine in response to cholesterol, where it acts to inhibit cholesterol synthesis in the liver and VLDL secretion,leading to a reduction in circulating cholesterol levels. Acts through binding to its receptor, GPR146. The sequence is that of Cholesin (Chlsn) from Mus musculus (Mouse).